We begin with the raw amino-acid sequence, 339 residues long: MTNRHLAKFAYREEFKGDTEALAAAVREDASTGSTSQLPLEVQFGKMSNQKTVSVCIIGRPNSGKSTLLNRIIGEKLSIVTPKVQTTRSIITGIITLKDTQVILYDTPGIFEPKGSLEKAMVRCAWSSLHSADLVLLIIDSLKSFDDITHNIVDKLRSLNIVPIFLLNKIDIESKYLNDIKAFLTENHPDSLLFPISALSGKNIDGLLEYITSKAKISPWLYAEDDITDLPMRFIAAEITREQLFLNLQKELPYKLTVQTEKWEDLKDKSVKINQVIVVSRESYKTIILGKNGSKIKEIGAKSRMQMERFFGFPVHLFLFVKVRELWENNQEFYQYMKI.

The RPE1 insert domain maps to 4–48; the sequence is RHLAKFAYREEFKGDTEALAAAVREDASTGSTSQLPLEVQFGKMS. The 170-residue stretch at 51 to 220 folds into the Era-type G domain; that stretch reads KTVSVCIIGR…ITSKAKISPW (170 aa). The interval 59 to 66 is G1; it reads GRPNSGKS. 59 to 66 serves as a coordination point for GTP; it reads GRPNSGKS. Residues 85 to 89 are G2; sequence QTTRS. A G3 region spans residues 106–109; sequence DTPG. Residues 106-110 and 168-171 each bind GTP; these read DTPGI and NKID. A G4 region spans residues 168–171; that stretch reads NKID. The interval 196-198 is G5; that stretch reads ISA. Positions 248–325 constitute a KH type-2 domain; the sequence is LQKELPYKLT…HLFLFVKVRE (78 aa).

Belongs to the TRAFAC class TrmE-Era-EngA-EngB-Septin-like GTPase superfamily. Era GTPase family. In terms of assembly, monomer.

The protein localises to the cytoplasm. It is found in the cell inner membrane. Functionally, an essential GTPase that binds both GDP and GTP, with rapid nucleotide exchange. Plays a role in 16S rRNA processing and 30S ribosomal subunit biogenesis and possibly also in cell cycle regulation and energy metabolism. This chain is GTPase Era, found in Rickettsia conorii (strain ATCC VR-613 / Malish 7).